The following is an 85-amino-acid chain: YcgL domain-containing protein ECA2367 (85 aa).

The YcgL domain occupies 1–85 (MFCVIYRSVK…PVESLLTTPV (85 aa)).

This Pectobacterium atrosepticum (strain SCRI 1043 / ATCC BAA-672) (Erwinia carotovora subsp. atroseptica) protein is YcgL domain-containing protein ECA2367.